We begin with the raw amino-acid sequence, 629 residues long: Genetic interactor of prohibitins 3, mitochondrial (629 aa).

The transit peptide at 1–19 (MFSRSILLRSVRKSLGRYY) directs the protein to the mitochondrion. The disordered stretch occupies residues 52-71 (KPGYYRLPGQNDSNTDKKAK). The CP-type G domain maps to 171 to 374 (IPKLQQVLST…LFDVPGFTTN (204 aa)).

This sequence belongs to the TRAFAC class YlqF/YawG GTPase family. GEP3 subfamily.

It localises to the mitochondrion. Functionally, may be involved in the mitochondrial lipid metabolism. This is Genetic interactor of prohibitins 3, mitochondrial (GEP3) from Candida albicans (strain SC5314 / ATCC MYA-2876) (Yeast).